Consider the following 82-residue polypeptide: EMBRYO SURROUNDING FACTOR 1-like protein 10 (82 aa).

A signal peptide spans 1 to 22 (MSSLYFAILCLFMIFLVPLHEF). 4 disulfides stabilise this stretch: Cys-39-Cys-55, Cys-44-Cys-74, Cys-53-Cys-70, and Cys-56-Cys-63.

The protein belongs to the MEG family. In terms of tissue distribution, expressed in stems, leaves and flowers.

This is EMBRYO SURROUNDING FACTOR 1-like protein 10 (ESFL10) from Arabidopsis thaliana (Mouse-ear cress).